The sequence spans 512 residues: Ribose import ATP-binding protein RbsA 2 (512 aa).

ABC transporter domains follow at residues 22–258 (LEMR…VGRD) and 263–512 (FPKV…TGNA). 54–61 (GENGAGKS) lines the ATP pocket.

It belongs to the ABC transporter superfamily. Ribose importer (TC 3.A.1.2.1) family. As to quaternary structure, the complex is composed of an ATP-binding protein (RbsA), two transmembrane proteins (RbsC) and a solute-binding protein (RbsB).

It localises to the cell inner membrane. The catalysed reaction is D-ribose(out) + ATP + H2O = D-ribose(in) + ADP + phosphate + H(+). Functionally, part of the ABC transporter complex RbsABC involved in ribose import. Responsible for energy coupling to the transport system. The sequence is that of Ribose import ATP-binding protein RbsA 2 from Rhizobium johnstonii (strain DSM 114642 / LMG 32736 / 3841) (Rhizobium leguminosarum bv. viciae).